Reading from the N-terminus, the 280-residue chain is Pantothenate synthetase (280 aa).

31 to 38 (MGNLHVGH) is a binding site for ATP. Histidine 38 functions as the Proton donor in the catalytic mechanism. Residue glutamine 62 participates in (R)-pantoate binding. Residue glutamine 62 coordinates beta-alanine. 150 to 153 (GKKD) lines the ATP pocket. Residue glutamine 156 participates in (R)-pantoate binding. ATP-binding positions include valine 179 and 187–190 (MSSR).

The protein belongs to the pantothenate synthetase family. Homodimer.

Its subcellular location is the cytoplasm. It carries out the reaction (R)-pantoate + beta-alanine + ATP = (R)-pantothenate + AMP + diphosphate + H(+). It participates in cofactor biosynthesis; (R)-pantothenate biosynthesis; (R)-pantothenate from (R)-pantoate and beta-alanine: step 1/1. Catalyzes the condensation of pantoate with beta-alanine in an ATP-dependent reaction via a pantoyl-adenylate intermediate. This Xanthomonas oryzae pv. oryzae (strain MAFF 311018) protein is Pantothenate synthetase.